Reading from the N-terminus, the 839-residue chain is MRRQVKKVLREKADDSMKPGWDVYQPSNDVVYAFNHYMQGSQIDAEAREKAEKAFQEAVKKHPFHNNADHAVDFHGTTVFRNAKGKVCGVLIPKALPSFATSMAADVLECAVARTSLRSALFGGVSPNSGIAGYFDYRGTPVELKCRKTSFTYEHTKEWRSVFPMIDYTSAIYKAALPDHWKAQDAAVPDVVRIHGSPFSTLTVNERFRTASHTDNGDFDNGYGVLAVLKGEYSGLSLALDDYGVCFNMQPTDVLLFDTHLFHSNTELEAKEANATWNRLSCVFYYRAALGEQPCVEEYRRRLKKAKEEKSTSLSFNHIEQKDNGENTNKPAPVYPVPLTPFSCAASAWALRGCAAAMLTRLHGLVRENASLMTELFGEPVEVADGLPRRAPEEIIPVHKHTNVQMHYLGGFSEKGDILNEAMNKRHYLDKENLQKMFGEEFVNIWTQSRTHWLQLVKKEWEHQKETNPTRTRFSWNNTSAMNFAFFDLCDVAKQLMCGAFGDREVNKKEEQSFWGMFAAHLDNACINEIGMLQGSMGMHKLNVKLKDYNFGGTRYLKDMPPEEQERRRRRRLEIEQARRRAPICNSESGDWLRNEAFDYQTEDVAVNYEREQWITPENNAKRFGFPERGVYGAEGAATGTISVLIVLPKPTNHRQKTCELPTSREADRIMKNPAAQRLLCAKPCNIGLSTSSNKSRTVLCGNIRIDKVFDGGSVGGKMYDFVIMRHLLAATTGEREPLECLVRWTSLARYCTFVVEVDLLDRHHYILKSEIGEEYSAVSEICFSALYSATYARDKVNLRTTPCLLSFIDKSGNMLESRFKFNGSPLNTVAFVVRRREK.

The thymine dioxygenase stretch occupies residues 86-288; it reads KVCGVLIPKA…RLSCVFYYRA (203 aa). Fe cation is bound by residues His-213, Asp-215, and His-263. Residue Arg-279 participates in 2-oxoglutarate binding. A DNA-binding JBP1 domain region spans residues 415–583; that stretch reads KGDILNEAMN…EIEQARRRAP (169 aa).

Belongs to the TET family. JBP1 subfamily. Monomer. Binds to DNA as a monomer. Requires Fe(2+) as cofactor.

The protein resides in the nucleus. It carries out the reaction thymine + 2-oxoglutarate + O2 = 5-hydroxymethyluracil + succinate + CO2. Functionally, dioxygenase that catalyzes the first step of DNA base J (beta-d-glucosyl-HOMedU) biosynthesis by converting thymine to 5-hydroxymethyluracil (HOMedU). DNA base J is a hypermodified thymidine residue found in the genome of kinetoplastid parasites, which is localized primarily to repetitive DNA, namely the telomeres, and is implicated in the regulation of antigenic variation. Also specifically binds to base J-containing DNA (J-DNA). Involved in propagation and maintenance of DNA base J synthesis initiated by JBP2 by specifically binding already synthesized DNA base J and propagating J synthesis. Thymine dioxygenase activity and J-DNA-binding are independent functions. This chain is Thymine dioxygenase JBP1 (JBP1), found in Trypanosoma brucei brucei.